Consider the following 143-residue polypeptide: Lutropin subunit beta (143 aa).

A signal peptide spans 1–22 (MEMLQGLLLLWLLLLNVGGVWT). Cystine bridges form between C31–C79, C45–C94, C48–C132, C56–C110, C60–C112, and C115–C122. An N-linked (GlcNAc...) asparagine glycan is attached at N35.

It belongs to the glycoprotein hormones subunit beta family. Heterodimer of a common alpha chain and a unique beta chain which confers biological specificity to thyrotropin, lutropin, follitropin and gonadotropin.

It localises to the secreted. Promotes spermatogenesis and ovulation by stimulating the testes and ovaries to synthesize steroids. The chain is Lutropin subunit beta (LHB) from Felis catus (Cat).